We begin with the raw amino-acid sequence, 190 residues long: Probable RNA-binding protein 18 (190 aa).

An RRM domain is found at His25–Ala106. Residues Val166–Arg190 are disordered.

This Pongo abelii (Sumatran orangutan) protein is Probable RNA-binding protein 18 (RBM18).